A 218-amino-acid chain; its full sequence is Large ribosomal subunit protein bL25 (218 aa).

Residues 197-218 (PAEESGEKPVAHIEEKESTEKE) form a disordered region. The span at 201 to 218 (SGEKPVAHIEEKESTEKE) shows a compositional bias: basic and acidic residues.

This sequence belongs to the bacterial ribosomal protein bL25 family. CTC subfamily. As to quaternary structure, part of the 50S ribosomal subunit; part of the 5S rRNA/L5/L18/L25 subcomplex. Contacts the 5S rRNA. Binds to the 5S rRNA independently of L5 and L18.

This is one of the proteins that binds to the 5S RNA in the ribosome where it forms part of the central protuberance. This Dehalococcoides mccartyi (strain ATCC BAA-2100 / JCM 16839 / KCTC 5957 / BAV1) protein is Large ribosomal subunit protein bL25.